Here is a 315-residue protein sequence, read N- to C-terminus: Aspartate carbamoyltransferase catalytic subunit (315 aa).

Residues arginine 55 and threonine 56 each coordinate carbamoyl phosphate. An L-aspartate-binding site is contributed by lysine 83. Positions 105, 138, and 141 each coordinate carbamoyl phosphate. Positions 171 and 225 each coordinate L-aspartate. The carbamoyl phosphate site is built by glycine 266 and proline 267.

It belongs to the aspartate/ornithine carbamoyltransferase superfamily. ATCase family. As to quaternary structure, heterododecamer (2C3:3R2) of six catalytic PyrB chains organized as two trimers (C3), and six regulatory PyrI chains organized as three dimers (R2).

It catalyses the reaction carbamoyl phosphate + L-aspartate = N-carbamoyl-L-aspartate + phosphate + H(+). The protein operates within pyrimidine metabolism; UMP biosynthesis via de novo pathway; (S)-dihydroorotate from bicarbonate: step 2/3. Catalyzes the condensation of carbamoyl phosphate and aspartate to form carbamoyl aspartate and inorganic phosphate, the committed step in the de novo pyrimidine nucleotide biosynthesis pathway. This Mycolicibacterium gilvum (strain PYR-GCK) (Mycobacterium gilvum (strain PYR-GCK)) protein is Aspartate carbamoyltransferase catalytic subunit.